The sequence spans 447 residues: Signal recognition particle 54 kDa protein (447 aa).

GTP is bound by residues 103-110 (GVQGSGKT), 185-189 (DTAGR), and 245-248 (TKMD).

It belongs to the GTP-binding SRP family. SRP54 subfamily. In terms of assembly, part of the signal recognition particle protein translocation system, which is composed of SRP and FtsY. Archaeal SRP consists of a 7S RNA molecule of 300 nucleotides and two protein subunits: SRP54 and SRP19.

It is found in the cytoplasm. The catalysed reaction is GTP + H2O = GDP + phosphate + H(+). Involved in targeting and insertion of nascent membrane proteins into the cytoplasmic membrane. Binds to the hydrophobic signal sequence of the ribosome-nascent chain (RNC) as it emerges from the ribosomes. The SRP-RNC complex is then targeted to the cytoplasmic membrane where it interacts with the SRP receptor FtsY. The polypeptide is Signal recognition particle 54 kDa protein (Saccharolobus solfataricus (strain ATCC 35092 / DSM 1617 / JCM 11322 / P2) (Sulfolobus solfataricus)).